The primary structure comprises 209 residues: Uracil phosphoribosyltransferase (209 aa).

5-phospho-alpha-D-ribose 1-diphosphate contacts are provided by residues Arg-79, Arg-104, and 131–139 (DPMLATGGS). Uracil is bound by residues Ile-194 and 199 to 201 (GDA). Asp-200 contributes to the 5-phospho-alpha-D-ribose 1-diphosphate binding site.

The protein belongs to the UPRTase family. The cofactor is Mg(2+).

The enzyme catalyses UMP + diphosphate = 5-phospho-alpha-D-ribose 1-diphosphate + uracil. The protein operates within pyrimidine metabolism; UMP biosynthesis via salvage pathway; UMP from uracil: step 1/1. With respect to regulation, allosterically activated by GTP. Its function is as follows. Catalyzes the conversion of uracil and 5-phospho-alpha-D-ribose 1-diphosphate (PRPP) to UMP and diphosphate. The chain is Uracil phosphoribosyltransferase from Oceanobacillus iheyensis (strain DSM 14371 / CIP 107618 / JCM 11309 / KCTC 3954 / HTE831).